Consider the following 506-residue polypeptide: MPPTSVSPPRTAPGPANPSPAHPSRVRVIHPGGGKPGGPVVYWMLRDQRLADNWALLHAAGLAAASASPLAVAFALFPRPFLLSARRRQLGFLLRGLRRLAADAAARHLPFFLFTGGPAEIPALVRRLGASTLVADFSPLRPVREALDAVVGDLRREAPGVAVHQVDAHNVVPVWTASAKMEYSAKTFRGKVSKVMDEYLVEFPELPAVVPWDREQPEGVDWDALIARVCSEAENVPEIDWCEPGEEAAIEALLGSKDGFLTKRIKSYETDRNDPTKPRALSGLSPYLHFGHISAQRCALEAKKCRHLSPKSVDAFLEELVVRRELADNFCYYQPQYDSLSGAWEWARKTLMDHAADKREHIYTREQLENAKTHDPLWNASQLEMVHHGKMHGFMRMYWAKKILEWTSGPEEALSTAIYLNDKYEIDGRDPSGYVGCMWSICGLHDQGWKERPVFGKIRYMNYAGCKRKFDVDAYISYVKRLAGQSKKRNAEESPNPVVKLSKSQH.

Positions 1–21 (MPPTSVSPPRTAPGPANPSPA) are enriched in pro residues. The tract at residues 1-33 (MPPTSVSPPRTAPGPANPSPAHPSRVRVIHPGG) is disordered. The region spanning 38 to 171 (GPVVYWMLRD…AVHQVDAHNV (134 aa)) is the Photolyase/cryptochrome alpha/beta domain. Residues tyrosine 268 and 282–285 (SGLS) each bind FAD. Serine 312 is subject to Phosphoserine. FAD contacts are provided by residues 319 to 327 (ELVVRRELA), lysine 390, asparagine 421, aspartate 427, and 427 to 429 (DGR). A disordered region spans residues 487–506 (KKRNAEESPNPVVKLSKSQH).

The protein belongs to the DNA photolyase class-2 family. FAD is required as a cofactor. As to expression, expressed in proliferating tissues. Highly expressed in roots and shoot apical meristem (SAM). Expressed in leaves, flag leaves, and panicle.

It localises to the nucleus. The enzyme catalyses cyclobutadipyrimidine (in DNA) = 2 pyrimidine residues (in DNA).. In terms of biological role, involved in repair of UV radiation-induced DNA damage. Catalyzes the light-dependent monomerization (300-600 nm) of cyclobutylpyrimidine dimers (CPDs), which are formed between adjacent bases on the same DNA strand upon exposure to ultraviolet radiation. Required for plant survival in the presence of UV-B light. Not involved in the repair of (6-4) photoproducts. The chain is Deoxyribodipyrimidine photo-lyase (PHR) from Oryza sativa subsp. japonica (Rice).